Reading from the N-terminus, the 222-residue chain is Chalcone--flavanone isomerase 1 (222 aa).

Thr48, Asn113, and Thr190 together coordinate substrate.

It belongs to the chalcone isomerase family.

The enzyme catalyses a chalcone = a flavanone.. The protein operates within secondary metabolite biosynthesis; flavonoid biosynthesis. In terms of biological role, catalyzes the intramolecular cyclization of bicyclic chalcones into tricyclic (S)-flavanones. Responsible for the isomerization of 4,2',4',6'-tetrahydroxychalcone (also termed chalcone) into naringenin. This chain is Chalcone--flavanone isomerase 1 (CHI1), found in Medicago sativa (Alfalfa).